Consider the following 415-residue polypeptide: Serine hydroxymethyltransferase (415 aa).

(6S)-5,6,7,8-tetrahydrofolate is bound by residues Leu117 and 121-123 (GHL). Residue Lys226 is modified to N6-(pyridoxal phosphate)lysine. Residues Glu241 and 349-351 (SPF) each bind (6S)-5,6,7,8-tetrahydrofolate.

Belongs to the SHMT family. As to quaternary structure, homodimer. It depends on pyridoxal 5'-phosphate as a cofactor.

It is found in the cytoplasm. It carries out the reaction (6R)-5,10-methylene-5,6,7,8-tetrahydrofolate + glycine + H2O = (6S)-5,6,7,8-tetrahydrofolate + L-serine. It functions in the pathway one-carbon metabolism; tetrahydrofolate interconversion. Its pathway is amino-acid biosynthesis; glycine biosynthesis; glycine from L-serine: step 1/1. Catalyzes the reversible interconversion of serine and glycine with tetrahydrofolate (THF) serving as the one-carbon carrier. This reaction serves as the major source of one-carbon groups required for the biosynthesis of purines, thymidylate, methionine, and other important biomolecules. Also exhibits THF-independent aldolase activity toward beta-hydroxyamino acids, producing glycine and aldehydes, via a retro-aldol mechanism. The protein is Serine hydroxymethyltransferase of Geotalea daltonii (strain DSM 22248 / JCM 15807 / FRC-32) (Geobacter daltonii).